Reading from the N-terminus, the 941-residue chain is Isoleucine--tRNA ligase (941 aa).

A 'HIGH' region motif is present at residues 59 to 69 (PYANGNIHIGH). Residue E562 coordinates L-isoleucyl-5'-AMP. The 'KMSKS' region signature appears at 603–607 (KMSKS). An ATP-binding site is contributed by K606. The Zn(2+) site is built by C904, C907, C924, and C927.

This sequence belongs to the class-I aminoacyl-tRNA synthetase family. IleS type 1 subfamily. In terms of assembly, monomer. Zn(2+) serves as cofactor.

The protein localises to the cytoplasm. It catalyses the reaction tRNA(Ile) + L-isoleucine + ATP = L-isoleucyl-tRNA(Ile) + AMP + diphosphate. Functionally, catalyzes the attachment of isoleucine to tRNA(Ile). As IleRS can inadvertently accommodate and process structurally similar amino acids such as valine, to avoid such errors it has two additional distinct tRNA(Ile)-dependent editing activities. One activity is designated as 'pretransfer' editing and involves the hydrolysis of activated Val-AMP. The other activity is designated 'posttransfer' editing and involves deacylation of mischarged Val-tRNA(Ile). This is Isoleucine--tRNA ligase from Haemophilus influenzae (strain PittEE).